The following is a 415-amino-acid chain: Multidrug resistance protein MdtA (415 aa).

Residues Met-1–Ala-21 form the signal peptide. The segment covering Asp-31 to Pro-47 has biased composition (polar residues). Disordered regions lie at residues Asp-31–Ala-60 and Glu-392–Ser-415. Residues Pro-399–Ser-415 are compositionally biased toward basic and acidic residues.

It belongs to the membrane fusion protein (MFP) (TC 8.A.1) family. In terms of assembly, part of a tripartite efflux system composed of MdtA, MdtB and MdtC.

It is found in the cell inner membrane. In terms of biological role, the MdtABC tripartite complex confers resistance against novobiocin and deoxycholate. This Escherichia coli O157:H7 protein is Multidrug resistance protein MdtA.